Here is a 201-residue protein sequence, read N- to C-terminus: Glycerol-3-phosphate acyltransferase (201 aa).

5 helical membrane passes run 3 to 23 (LFAI…SAIL), 53 to 73 (WVAL…VWLG), 80 to 100 (HFEL…PIFF), 115 to 135 (IAPI…LIFF), and 153 to 175 (FYVW…LLIY).

The protein belongs to the PlsY family. In terms of assembly, probably interacts with PlsX.

The protein localises to the cell inner membrane. It catalyses the reaction an acyl phosphate + sn-glycerol 3-phosphate = a 1-acyl-sn-glycero-3-phosphate + phosphate. The protein operates within lipid metabolism; phospholipid metabolism. Functionally, catalyzes the transfer of an acyl group from acyl-phosphate (acyl-PO(4)) to glycerol-3-phosphate (G3P) to form lysophosphatidic acid (LPA). This enzyme utilizes acyl-phosphate as fatty acyl donor, but not acyl-CoA or acyl-ACP. The chain is Glycerol-3-phosphate acyltransferase from Pasteurella multocida (strain Pm70).